The following is a 303-amino-acid chain: Cytosolic Fe-S cluster assembly factor CFD1 (303 aa).

15–22 (GKGGVGKS) serves as a coordination point for ATP. Positions 199 and 202 each coordinate [4Fe-4S] cluster.

Belongs to the Mrp/NBP35 ATP-binding proteins family. NUBP2/CFD1 subfamily. In terms of assembly, heterotetramer of 2 NBP35 and 2 CFD1 chains. It depends on [4Fe-4S] cluster as a cofactor.

The protein localises to the cytoplasm. Component of the cytosolic iron-sulfur (Fe/S) protein assembly (CIA) machinery. Required for maturation of extramitochondrial Fe-S proteins. The NBP35-CFD1 heterotetramer forms a Fe-S scaffold complex, mediating the de novo assembly of an Fe-S cluster and its transfer to target apoproteins. The chain is Cytosolic Fe-S cluster assembly factor CFD1 from Chaetomium globosum (strain ATCC 6205 / CBS 148.51 / DSM 1962 / NBRC 6347 / NRRL 1970) (Soil fungus).